Consider the following 289-residue polypeptide: ATP synthase gamma chain (289 aa).

The protein belongs to the ATPase gamma chain family. As to quaternary structure, F-type ATPases have 2 components, CF(1) - the catalytic core - and CF(0) - the membrane proton channel. CF(1) has five subunits: alpha(3), beta(3), gamma(1), delta(1), epsilon(1). CF(0) has three main subunits: a, b and c.

The protein resides in the cell inner membrane. Its function is as follows. Produces ATP from ADP in the presence of a proton gradient across the membrane. The gamma chain is believed to be important in regulating ATPase activity and the flow of protons through the CF(0) complex. In Actinobacillus succinogenes (strain ATCC 55618 / DSM 22257 / CCUG 43843 / 130Z), this protein is ATP synthase gamma chain.